The following is a 261-amino-acid chain: Cytochrome c oxidase subunit 3 (261 aa).

The Mitochondrial matrix segment spans residues 1–15 (MTHQTHAYHMVNPSP). Residues 16-34 (WPLTGALSALLMTSGLIMW) traverse the membrane as a helical segment. Topologically, residues 35 to 40 (FHFNST) are mitochondrial intermembrane. The helical transmembrane segment at 41 to 66 (TLLMLGLTTNMLTMYQWWRDIIREST) threads the bilayer. Over 67–72 (FQGHHT) the chain is Mitochondrial matrix. A helical membrane pass occupies residues 73-105 (PNVQKGLRYGMILFIISEVLFFTGFFWAFYHSS). At 106 to 128 (LAPTPELGGCWPPTGIHPLNPLE) the chain is on the mitochondrial intermembrane side. A helical membrane pass occupies residues 129 to 152 (VPLLNTSVLLASGVSITWAHHSLM). Residues 153–155 (EGN) lie on the Mitochondrial matrix side of the membrane. Residues 156–183 (RNHMLQALFITIALGVYFTLLQASEYYE) form a helical membrane-spanning segment. Over 184–190 (APFTISD) the chain is Mitochondrial intermembrane. The helical transmembrane segment at 191–223 (GVYGSTFFVATGFHGLHVIIGSTFLIVCFFRQL) threads the bilayer. Topologically, residues 224-232 (KFHFTSSHH) are mitochondrial matrix. A helical membrane pass occupies residues 233-256 (FGFEAAAWYWHFVDVVWLFLYVSI). The Mitochondrial intermembrane segment spans residues 257–261 (YWWGS).

This sequence belongs to the cytochrome c oxidase subunit 3 family. As to quaternary structure, component of the cytochrome c oxidase (complex IV, CIV), a multisubunit enzyme composed of 14 subunits. The complex is composed of a catalytic core of 3 subunits MT-CO1, MT-CO2 and MT-CO3, encoded in the mitochondrial DNA, and 11 supernumerary subunits COX4I, COX5A, COX5B, COX6A, COX6B, COX6C, COX7A, COX7B, COX7C, COX8 and NDUFA4, which are encoded in the nuclear genome. The complex exists as a monomer or a dimer and forms supercomplexes (SCs) in the inner mitochondrial membrane with NADH-ubiquinone oxidoreductase (complex I, CI) and ubiquinol-cytochrome c oxidoreductase (cytochrome b-c1 complex, complex III, CIII), resulting in different assemblies (supercomplex SCI(1)III(2)IV(1) and megacomplex MCI(2)III(2)IV(2)).

The protein resides in the mitochondrion inner membrane. The enzyme catalyses 4 Fe(II)-[cytochrome c] + O2 + 8 H(+)(in) = 4 Fe(III)-[cytochrome c] + 2 H2O + 4 H(+)(out). Functionally, component of the cytochrome c oxidase, the last enzyme in the mitochondrial electron transport chain which drives oxidative phosphorylation. The respiratory chain contains 3 multisubunit complexes succinate dehydrogenase (complex II, CII), ubiquinol-cytochrome c oxidoreductase (cytochrome b-c1 complex, complex III, CIII) and cytochrome c oxidase (complex IV, CIV), that cooperate to transfer electrons derived from NADH and succinate to molecular oxygen, creating an electrochemical gradient over the inner membrane that drives transmembrane transport and the ATP synthase. Cytochrome c oxidase is the component of the respiratory chain that catalyzes the reduction of oxygen to water. Electrons originating from reduced cytochrome c in the intermembrane space (IMS) are transferred via the dinuclear copper A center (CU(A)) of subunit 2 and heme A of subunit 1 to the active site in subunit 1, a binuclear center (BNC) formed by heme A3 and copper B (CU(B)). The BNC reduces molecular oxygen to 2 water molecules using 4 electrons from cytochrome c in the IMS and 4 protons from the mitochondrial matrix. The protein is Cytochrome c oxidase subunit 3 (MT-CO3) of Litocranius walleri (Gerenuk).